The sequence spans 144 residues: Large ribosomal subunit protein uL15 (144 aa).

The disordered stretch occupies residues 1–52 (MRLNTLSPANGARHSRKRLGRGIGSGFGKTSGRGHKGQKSRSGSSIRRGFEG). Positions 21–31 (RGIGSGFGKTS) are enriched in gly residues.

Belongs to the universal ribosomal protein uL15 family. Part of the 50S ribosomal subunit.

Its function is as follows. Binds to the 23S rRNA. This chain is Large ribosomal subunit protein uL15, found in Buchnera aphidicola subsp. Acyrthosiphon pisum (strain 5A).